Here is a 102-residue protein sequence, read N- to C-terminus: Large ribosomal subunit protein uL24 (102 aa).

The protein belongs to the universal ribosomal protein uL24 family. In terms of assembly, part of the 50S ribosomal subunit.

One of two assembly initiator proteins, it binds directly to the 5'-end of the 23S rRNA, where it nucleates assembly of the 50S subunit. Its function is as follows. One of the proteins that surrounds the polypeptide exit tunnel on the outside of the subunit. This is Large ribosomal subunit protein uL24 from Cupriavidus pinatubonensis (strain JMP 134 / LMG 1197) (Cupriavidus necator (strain JMP 134)).